Reading from the N-terminus, the 81-residue chain is Cytochrome c oxidase subunit 7B2, mitochondrial (81 aa).

The transit peptide at 1-25 (MMFPLARNALSSLKIQSILQSMARH) directs the protein to the mitochondrion. Residues 26–33 (SHVKHSPD) are Mitochondrial matrix-facing. A helical membrane pass occupies residues 34–60 (FHDKYGNAVLASGTAFCVATWVFTATQ). Residues 61-81 (IGIEWNLSPVGRVTPKEWKHQ) are Mitochondrial intermembrane-facing.

This sequence belongs to the cytochrome c oxidase VIIb family. In terms of assembly, component of the cytochrome c oxidase (complex IV, CIV), a multisubunit enzyme composed of 14 subunits. The complex is composed of a catalytic core of 3 subunits MT-CO1, MT-CO2 and MT-CO3, encoded in the mitochondrial DNA, and 11 supernumerary subunits COX4I, COX5A, COX5B, COX6A, COX6B, COX6C, COX7A, COX7B, COX7C, COX8 and NDUFA4, which are encoded in the nuclear genome. The complex exists as a monomer or a dimer and forms supercomplexes (SCs) in the inner mitochondrial membrane with NADH-ubiquinone oxidoreductase (complex I, CI) and ubiquinol-cytochrome c oxidoreductase (cytochrome b-c1 complex, complex III, CIII), resulting in different assemblies (supercomplex SCI(1)III(2)IV(1) and megacomplex MCI(2)III(2)IV(2)).

It is found in the mitochondrion inner membrane. It functions in the pathway energy metabolism; oxidative phosphorylation. Component of the cytochrome c oxidase, the last enzyme in the mitochondrial electron transport chain which drives oxidative phosphorylation. The respiratory chain contains 3 multisubunit complexes succinate dehydrogenase (complex II, CII), ubiquinol-cytochrome c oxidoreductase (cytochrome b-c1 complex, complex III, CIII) and cytochrome c oxidase (complex IV, CIV), that cooperate to transfer electrons derived from NADH and succinate to molecular oxygen, creating an electrochemical gradient over the inner membrane that drives transmembrane transport and the ATP synthase. Cytochrome c oxidase is the component of the respiratory chain that catalyzes the reduction of oxygen to water. Electrons originating from reduced cytochrome c in the intermembrane space (IMS) are transferred via the dinuclear copper A center (CU(A)) of subunit 2 and heme A of subunit 1 to the active site in subunit 1, a binuclear center (BNC) formed by heme A3 and copper B (CU(B)). The BNC reduces molecular oxygen to 2 water molecules using 4 electrons from cytochrome c in the IMS and 4 protons from the mitochondrial matrix. The chain is Cytochrome c oxidase subunit 7B2, mitochondrial (COX7B2) from Homo sapiens (Human).